A 187-amino-acid polypeptide reads, in one-letter code: MKYLITGLGNIGEEYRNTRHNIGFTVLDALAKASNLVFTDGRYGATATLSLKGRQLILLKPSTYMNLSGNAVRYWMQKENIPLENVLIVVDDLALPFGTLRLKGKGSDAGHNGLKHIAATLGTQDYARLRFGIGNDFPRGGQIDFVLGHFTDEDLKTMDERVATACDIIKSFCLAGISITMNQYNKK.

Y15 contacts tRNA. H20 serves as the catalytic Proton acceptor. 3 residues coordinate tRNA: Y64, N66, and N112.

It belongs to the PTH family. In terms of assembly, monomer.

The protein resides in the cytoplasm. The catalysed reaction is an N-acyl-L-alpha-aminoacyl-tRNA + H2O = an N-acyl-L-amino acid + a tRNA + H(+). Its function is as follows. Hydrolyzes ribosome-free peptidyl-tRNAs (with 1 or more amino acids incorporated), which drop off the ribosome during protein synthesis, or as a result of ribosome stalling. Catalyzes the release of premature peptidyl moieties from peptidyl-tRNA molecules trapped in stalled 50S ribosomal subunits, and thus maintains levels of free tRNAs and 50S ribosomes. This Phocaeicola vulgatus (strain ATCC 8482 / DSM 1447 / JCM 5826 / CCUG 4940 / NBRC 14291 / NCTC 11154) (Bacteroides vulgatus) protein is Peptidyl-tRNA hydrolase.